We begin with the raw amino-acid sequence, 96 residues long: Small ribosomal subunit protein uS17 (96 aa).

It belongs to the universal ribosomal protein uS17 family. As to quaternary structure, part of the 30S ribosomal subunit.

In terms of biological role, one of the primary rRNA binding proteins, it binds specifically to the 5'-end of 16S ribosomal RNA. The protein is Small ribosomal subunit protein uS17 of Deinococcus radiodurans (strain ATCC 13939 / DSM 20539 / JCM 16871 / CCUG 27074 / LMG 4051 / NBRC 15346 / NCIMB 9279 / VKM B-1422 / R1).